The primary structure comprises 275 residues: 2,3,4,5-tetrahydropyridine-2,6-dicarboxylate N-succinyltransferase (275 aa).

Positions 104 and 141 each coordinate substrate.

This sequence belongs to the transferase hexapeptide repeat family. In terms of assembly, homotrimer.

The protein localises to the cytoplasm. It catalyses the reaction (S)-2,3,4,5-tetrahydrodipicolinate + succinyl-CoA + H2O = (S)-2-succinylamino-6-oxoheptanedioate + CoA. It participates in amino-acid biosynthesis; L-lysine biosynthesis via DAP pathway; LL-2,6-diaminopimelate from (S)-tetrahydrodipicolinate (succinylase route): step 1/3. The polypeptide is 2,3,4,5-tetrahydropyridine-2,6-dicarboxylate N-succinyltransferase (Actinobacillus succinogenes (strain ATCC 55618 / DSM 22257 / CCUG 43843 / 130Z)).